Reading from the N-terminus, the 281-residue chain is Pantothenate synthetase (281 aa).

30–37 (MGYLHEGH) is a binding site for ATP. Residue His37 is the Proton donor of the active site. (R)-pantoate is bound at residue Gln60. Gln60 contacts beta-alanine. 146–149 (GEKD) contributes to the ATP binding site. Gln152 contributes to the (R)-pantoate binding site. ATP-binding positions include Ile175 and 183 to 186 (KSSR).

It belongs to the pantothenate synthetase family. As to quaternary structure, homodimer.

The protein resides in the cytoplasm. It carries out the reaction (R)-pantoate + beta-alanine + ATP = (R)-pantothenate + AMP + diphosphate + H(+). Its pathway is cofactor biosynthesis; (R)-pantothenate biosynthesis; (R)-pantothenate from (R)-pantoate and beta-alanine: step 1/1. Functionally, catalyzes the condensation of pantoate with beta-alanine in an ATP-dependent reaction via a pantoyl-adenylate intermediate. This chain is Pantothenate synthetase, found in Ruminiclostridium cellulolyticum (strain ATCC 35319 / DSM 5812 / JCM 6584 / H10) (Clostridium cellulolyticum).